A 652-amino-acid polypeptide reads, in one-letter code: DNA ligase (652 aa).

NAD(+) contacts are provided by residues 29 to 33 (DSEYD), 78 to 79 (SL), and glutamate 107. Lysine 109 acts as the N6-AMP-lysine intermediate in catalysis. The NAD(+) site is built by arginine 130, glutamate 164, lysine 278, and lysine 302. Cysteine 395, cysteine 398, cysteine 413, and cysteine 418 together coordinate Zn(2+). Residues 577-652 (VADAALSGLT…VRDEAWLESL (76 aa)) enclose the BRCT domain.

The protein belongs to the NAD-dependent DNA ligase family. LigA subfamily. Mg(2+) is required as a cofactor. Mn(2+) serves as cofactor.

It carries out the reaction NAD(+) + (deoxyribonucleotide)n-3'-hydroxyl + 5'-phospho-(deoxyribonucleotide)m = (deoxyribonucleotide)n+m + AMP + beta-nicotinamide D-nucleotide.. Functionally, DNA ligase that catalyzes the formation of phosphodiester linkages between 5'-phosphoryl and 3'-hydroxyl groups in double-stranded DNA using NAD as a coenzyme and as the energy source for the reaction. It is essential for DNA replication and repair of damaged DNA. This chain is DNA ligase, found in Streptococcus pneumoniae serotype 4 (strain ATCC BAA-334 / TIGR4).